A 667-amino-acid polypeptide reads, in one-letter code: DNA ligase (667 aa).

NAD(+)-binding positions include 30–34 (DSEYD), 79–80 (SL), and glutamate 112. Lysine 114 (N6-AMP-lysine intermediate) is an active-site residue. Positions 135, 172, 289, and 313 each coordinate NAD(+). Positions 407, 410, 425, and 431 each coordinate Zn(2+). The BRCT domain occupies 590–667 (VRDNPLKGKT…SENEFLALLA (78 aa)).

It belongs to the NAD-dependent DNA ligase family. LigA subfamily. Mg(2+) is required as a cofactor. The cofactor is Mn(2+).

The enzyme catalyses NAD(+) + (deoxyribonucleotide)n-3'-hydroxyl + 5'-phospho-(deoxyribonucleotide)m = (deoxyribonucleotide)n+m + AMP + beta-nicotinamide D-nucleotide.. DNA ligase that catalyzes the formation of phosphodiester linkages between 5'-phosphoryl and 3'-hydroxyl groups in double-stranded DNA using NAD as a coenzyme and as the energy source for the reaction. It is essential for DNA replication and repair of damaged DNA. This chain is DNA ligase, found in Histophilus somni (strain 2336) (Haemophilus somnus).